We begin with the raw amino-acid sequence, 652 residues long: tRNA-guanine(15) transglycosylase (652 aa).

The active-site Nucleophile is the D88. Substrate-binding residues include D123 and A194. Zn(2+) is bound by residues C280, C282, and C285. Residues 577-652 (KYRVVIDSEV…AAVSVRSGFK (76 aa)) form the PUA domain.

The protein belongs to the archaeosine tRNA-ribosyltransferase family. The cofactor is Zn(2+).

It carries out the reaction guanosine(15) in tRNA + 7-cyano-7-deazaguanine = 7-cyano-7-carbaguanosine(15) in tRNA + guanine. The protein operates within tRNA modification; archaeosine-tRNA biosynthesis. In terms of biological role, exchanges the guanine residue with 7-cyano-7-deazaguanine (preQ0) at position 15 in the dihydrouridine loop (D-loop) of archaeal tRNAs. This is tRNA-guanine(15) transglycosylase from Methanococcus aeolicus (strain ATCC BAA-1280 / DSM 17508 / OCM 812 / Nankai-3).